We begin with the raw amino-acid sequence, 578 residues long: Protein O-linked-mannose beta-1,4-N-acetylglucosaminyltransferase 2 (578 aa).

Topologically, residues Met-1–Ser-4 are cytoplasmic. A helical; Signal-anchor for type II membrane protein transmembrane segment spans residues Ala-5–Leu-25. The Lumenal portion of the chain corresponds to Leu-26–Thr-578. 6 N-linked (GlcNAc...) asparagine glycosylation sites follow: Asn-98, Asn-275, Asn-335, Asn-451, Asn-541, and Asn-563. The 95-residue stretch at Arg-484 to Thr-578 folds into the Fibronectin type-III domain.

The protein belongs to the glycosyltransferase 61 family.

The protein resides in the endoplasmic reticulum membrane. It carries out the reaction 3-O-(alpha-D-mannosyl)-L-threonyl-[protein] + UDP-N-acetyl-alpha-D-glucosamine = 3-O-(N-acetyl-beta-D-glucosaminyl-(1-&gt;4)-alpha-D-mannosyl)-L-threonyl-[protein] + UDP + H(+). The protein operates within protein modification; protein glycosylation. O-linked mannose beta-1,4-N-acetylglucosaminyltransferase that transfers UDP-N-acetyl-D-glucosamine to the 4-position of the mannose to generate N-acetyl-D-glucosamine-beta-1,4-O-D-mannosylprotein. Involved in the biosynthesis of the phosphorylated O-mannosyl trisaccharide (N-acetylgalactosamine-beta-3-N-acetylglucosamine-beta-4-(phosphate-6-)mannose), a carbohydrate structure present in alpha-dystroglycan (DAG1), which is required for binding laminin G-like domain-containing extracellular proteins with high affinity. The sequence is that of Protein O-linked-mannose beta-1,4-N-acetylglucosaminyltransferase 2 (pomgnt2) from Xenopus laevis (African clawed frog).